The following is a 283-amino-acid chain: Extracellular metalloprotease MGG_08041 (283 aa).

Positions 1–22 (MQINVVKTFLFALAASSVSALA) are cleaved as a signal peptide. Asn55 carries an N-linked (GlcNAc...) asparagine glycan. His197 contacts Zn(2+). The active site involves Glu198. Residue His201 coordinates Zn(2+). Cys233 and Cys260 are disulfide-bonded.

This sequence belongs to the peptidase M43B family.

It is found in the secreted. Functionally, secreted metalloproteinase that allows assimilation of proteinaceous substrates. The polypeptide is Extracellular metalloprotease MGG_08041 (Pyricularia oryzae (strain 70-15 / ATCC MYA-4617 / FGSC 8958) (Rice blast fungus)).